Here is a 167-residue protein sequence, read N- to C-terminus: Small ribosomal subunit protein uS9 (167 aa).

Disordered stretches follow at residues 1-45 (MSEY…GGAT) and 137-167 (KAGF…FSKR). Acidic residues predominate over residues 9-19 (DTVEDITESDE). A compositionally biased stretch (polar residues) spans 20–36 (FTGTYTSESSTPATGGN). The segment covering 143–152 (RDPRATERKK) has biased composition (basic and acidic residues). Over residues 153-167 (AGLKKARKAPQFSKR) the composition is skewed to basic residues.

The protein belongs to the universal ribosomal protein uS9 family.

This Kineococcus radiotolerans (strain ATCC BAA-149 / DSM 14245 / SRS30216) protein is Small ribosomal subunit protein uS9.